We begin with the raw amino-acid sequence, 122 residues long: Large ribosomal subunit protein uL18 (122 aa).

It belongs to the universal ribosomal protein uL18 family. As to quaternary structure, part of the 50S ribosomal subunit; part of the 5S rRNA/L5/L18/L25 subcomplex. Contacts the 5S and 23S rRNAs.

Functionally, this is one of the proteins that bind and probably mediate the attachment of the 5S RNA into the large ribosomal subunit, where it forms part of the central protuberance. This chain is Large ribosomal subunit protein uL18, found in Dictyoglomus turgidum (strain DSM 6724 / Z-1310).